The primary structure comprises 220 residues: Deoxyribose-phosphate aldolase (220 aa).

Asp-92 (proton donor/acceptor) is an active-site residue. Catalysis depends on Lys-157, which acts as the Schiff-base intermediate with acetaldehyde. Lys-186 acts as the Proton donor/acceptor in catalysis.

Belongs to the DeoC/FbaB aldolase family. DeoC type 1 subfamily.

The protein resides in the cytoplasm. The catalysed reaction is 2-deoxy-D-ribose 5-phosphate = D-glyceraldehyde 3-phosphate + acetaldehyde. It functions in the pathway carbohydrate degradation; 2-deoxy-D-ribose 1-phosphate degradation; D-glyceraldehyde 3-phosphate and acetaldehyde from 2-deoxy-alpha-D-ribose 1-phosphate: step 2/2. Functionally, catalyzes a reversible aldol reaction between acetaldehyde and D-glyceraldehyde 3-phosphate to generate 2-deoxy-D-ribose 5-phosphate. The polypeptide is Deoxyribose-phosphate aldolase (Caldicellulosiruptor saccharolyticus (strain ATCC 43494 / DSM 8903 / Tp8T 6331)).